We begin with the raw amino-acid sequence, 245 residues long: DNA repair protein RecO (245 aa).

It belongs to the RecO family.

Involved in DNA repair and RecF pathway recombination. This is DNA repair protein RecO from Porphyromonas gingivalis (strain ATCC 33277 / DSM 20709 / CIP 103683 / JCM 12257 / NCTC 11834 / 2561).